We begin with the raw amino-acid sequence, 319 residues long: Acetyl-coenzyme A carboxylase carboxyl transferase subunit beta, chloroplastic (319 aa).

A CoA carboxyltransferase N-terminal domain is found at 47–319; it reads LWVQCDNCES…ELFYVLQSSS (273 aa). Cysteine 51, cysteine 54, cysteine 70, and cysteine 73 together coordinate Zn(2+). The C4-type zinc finger occupies 51–73; sequence CDNCESLLYIRFLRENKSVCEEC.

Belongs to the AccD/PCCB family. As to quaternary structure, acetyl-CoA carboxylase is a heterohexamer composed of biotin carboxyl carrier protein, biotin carboxylase and 2 subunits each of ACCase subunit alpha and ACCase plastid-coded subunit beta (accD). Zn(2+) is required as a cofactor.

Its subcellular location is the plastid. It localises to the chloroplast stroma. It catalyses the reaction N(6)-carboxybiotinyl-L-lysyl-[protein] + acetyl-CoA = N(6)-biotinyl-L-lysyl-[protein] + malonyl-CoA. It functions in the pathway lipid metabolism; malonyl-CoA biosynthesis; malonyl-CoA from acetyl-CoA: step 1/1. Its function is as follows. Component of the acetyl coenzyme A carboxylase (ACC) complex. Biotin carboxylase (BC) catalyzes the carboxylation of biotin on its carrier protein (BCCP) and then the CO(2) group is transferred by the transcarboxylase to acetyl-CoA to form malonyl-CoA. The protein is Acetyl-coenzyme A carboxylase carboxyl transferase subunit beta, chloroplastic of Picea abies (Norway spruce).